The following is a 245-amino-acid chain: MSTNPKPTFRRILLKLSGEALMGDEGFGIDPKVLDRMAQEVKELVELGIQVGVVIGGGNLFRGEGLAKAGMNRVVGDHMGMLATVMNGLAMRDALHRAYVNARLMSAIPLKGVCDDYNWAEAISLLKSGRVVIFAAGTGNPFCTTDSAACLRGIEIEAEVVLKGTKVDGVYSDDPMKNPDAVKYDELSYSEILEKELKVMDLAAFTMARDHDMPILVFNMNKPGALRRVIMGEEEGTLIRAKKVI.

Residue 15 to 18 participates in ATP binding; the sequence is KLSG. Residues 23 to 28 form an involved in allosteric activation by GTP region; it reads GDEGFG. Gly-57 contributes to the UMP binding site. Residues Gly-58 and Arg-62 each coordinate ATP. Residues Asp-77 and 138–145 each bind UMP; that span reads TGNPFCTT. ATP is bound by residues Thr-165, Tyr-171, and Asp-174.

It belongs to the UMP kinase family. Homohexamer.

The protein resides in the cytoplasm. It carries out the reaction UMP + ATP = UDP + ADP. Its pathway is pyrimidine metabolism; CTP biosynthesis via de novo pathway; UDP from UMP (UMPK route): step 1/1. Its activity is regulated as follows. Allosterically activated by GTP. Inhibited by UTP. Catalyzes the reversible phosphorylation of UMP to UDP. The sequence is that of Uridylate kinase from Shewanella sp. (strain W3-18-1).